Consider the following 817-residue polypeptide: Myosin-A (817 aa).

A Phosphoserine modification is found at S19. Positions 97-771 (MSFGDIGLLN…GAKMLSKIQR (675 aa)) constitute a Myosin motor domain. 191-198 (GESGAGKT) lines the ATP pocket. Positions 661 to 671 (PHFIRCIKPNE) are actin-binding. The tail stretch occupies residues 773-817 (KLVEWENCVSVIEAAIMKYKHKQNVENNVSSLMRVQAHIRKRMVA).

The protein belongs to the TRAFAC class myosin-kinesin ATPase superfamily. Myosin family. As to quaternary structure, interacts with ACT1.

The protein resides in the cell membrane. Its function is as follows. Myosins are actin-based motor molecules with ATPase activity. Unconventional myosins serve in intracellular movements. Their highly divergent tails are presumed to bind to membranous compartments, which would be moved relative to actin filaments. The polypeptide is Myosin-A (Plasmodium yoelii yoelii).